Here is a 120-residue protein sequence, read N- to C-terminus: uncharacterized protein (120 aa).

Residues 13–119 (VIDKDICKGM…YGLWMAANEE (107 aa)) form the PRD domain.

This is an uncharacterized protein from Escherichia coli (strain K12).